Reading from the N-terminus, the 1335-residue chain is MDGVHLGENLEDKDTEFTWEVKANDRTYHKQFKKKGFLCWRQKKYKSNAIHTAKYNIFSFLPLNLYEQFHRMSNLYFLFIIILQGIPEISTLPWFTLFAPLVCLFVIRATRDLVDDIGRHRSDKIINNRPCQILRGKSFLWKKWKNLCVGDVVCLSKDSIVPADLLLLASTEPSSLCYVETADIDGETNLKFRQALTVTHHELTSPKKMASFQGTVTCEEPNSRMHHFVGSLEWNSRKYPLDIGNLLLRGCKIRNTDTCYGLVIYAGLDTKIMKNCGKIHLKRTKLDLMMNKLVALIFLSLVIASLLLTVGFTFMVKQFKAKHYYMSPTHGRSDAMESFFIFWGFLILLSVMVPMAMFIIAEFIYLGNSIFINWDLNMYYEPLDMPAKARSTSLNDQLGQVQYIFSDKTGTLTQNIMTFKKCCINGCIYDSDDEHGTLRKRNPYAWNPFADGKLQFYNKELESLVQGRQDRAVQEFWRLLAICHTVMVQEKDNQLLYQAASPDEEALVTAARNFGYVFLSRTQDTITLVELGEERVYQVLAMMDFNSVRKRMSVLVRNPEGSICLYTKGADTVILERLRSKGVMEATTEEVLAAFAEQTLRTLCLAYKDVEEDAYKEWEPEHQEAALLLQNRAQALHQVYNKMEQNLQLLGATAIEDKLQDGVPETIKCLKKGNIKIWVLTGDKPETAVNIGFACQLLSENMIILEDKDINQVLERYWEDNVHQKAFKMMTHHNMALVINGEFLDQLLLSLRKEPRALVQNAVVDEVAQEPVVSALDFLQKRRISQMWRNAGPSLGTSHSADSKIRESPEVQRERAFVDLASKCQAVICCRVTPKQKALVVALVKKYQQVVTLAIGDGANDVNMIKTADIGVGLAGQEGMQAVQNSDYVLAQFCYLQRLLLVHGRWSYMRVCKFLRYFFYKTVASMMAQIWFSLVNGFSAQPLYEGWFLALFNLLYSTLPVLYIGLFEQDVTAEKSLKMPELYMAGQKGELFNYSIFMQAITHGTITSMINFFVTVMVSSDMSKAGSSHDYQSLGVLVAISSLLSVTLEVMLVVKYWTLLFVGAVVLSLSSYVLMTSLTQSLWMYRISPKTFPFLFADYNVLFEPCSLLLIVLNVALNVLPMLALRTIHRTVLKQRPKGEEEAPSEEVAVEPAMRHLRRGIPARRSSYAFSHREGYANLITQGTILRRQTHVDDSDGGTVCESLNPPEEDIPLQNKDSVFNPRKISILAKKRRHFFGKGSQEEVHPNTSSQTMEKQPTIHRDSETQKLPTTTSATSGKLLPSASEDEAFYSVASQYTLASQPKHTDVHSSFWKSPLWRDSASSSPSQLEVPRKQS.

The Cytoplasmic portion of the chain corresponds to 1 to 74 (MDGVHLGENL…LYEQFHRMSN (74 aa)). A helical transmembrane segment spans residues 75 to 95 (LYFLFIIILQGIPEISTLPWF). Residues 96–295 (TLFAPLVCLF…LDLMMNKLVA (200 aa)) are Exoplasmic loop-facing. The helical transmembrane segment at 296-316 (LIFLSLVIASLLLTVGFTFMV) threads the bilayer. Residues 317–339 (KQFKAKHYYMSPTHGRSDAMESF) lie on the Cytoplasmic side of the membrane. A helical transmembrane segment spans residues 340–360 (FIFWGFLILLSVMVPMAMFII). At 361 to 917 (AEFIYLGNSI…YMRVCKFLRY (557 aa)) the chain is on the exoplasmic loop side. The active-site 4-aspartylphosphate intermediate is the aspartate 407. Positions 407, 408, 409, 504, 545, 568, 601, 681, 682, 683, 831, and 837 each coordinate ATP. Residue aspartate 407 coordinates Mg(2+). Threonine 409 contacts Mg(2+). Residue aspartate 857 coordinates Mg(2+). Positions 860 and 861 each coordinate ATP. Aspartate 861 serves as a coordination point for Mg(2+). Residues 918-938 (FFYKTVASMMAQIWFSLVNGF) form a helical membrane-spanning segment. The Cytoplasmic portion of the chain corresponds to 939–946 (SAQPLYEG). The chain crosses the membrane as a helical span at residues 947–967 (WFLALFNLLYSTLPVLYIGLF). At 968–995 (EQDVTAEKSLKMPELYMAGQKGELFNYS) the chain is on the exoplasmic loop side. A helical transmembrane segment spans residues 996-1016 (IFMQAITHGTITSMINFFVTV). The Cytoplasmic segment spans residues 1017-1033 (MVSSDMSKAGSSHDYQS). A helical transmembrane segment spans residues 1034 to 1054 (LGVLVAISSLLSVTLEVMLVV). A topological domain (exoplasmic loop) is located at residue lysine 1055. The helical transmembrane segment at 1056–1076 (YWTLLFVGAVVLSLSSYVLMT) threads the bilayer. Residues 1077 to 1104 (SLTQSLWMYRISPKTFPFLFADYNVLFE) lie on the Cytoplasmic side of the membrane. Residues 1105 to 1125 (PCSLLLIVLNVALNVLPMLAL) traverse the membrane as a helical segment. Over 1126 to 1335 (RTIHRTVLKQ…SQLEVPRKQS (210 aa)) the chain is Exoplasmic loop. Disordered regions lie at residues 1192 to 1215 (VDDS…PLQN), 1236 to 1280 (FGKG…GKLL), and 1314 to 1335 (SPLW…RKQS). Composition is skewed to polar residues over residues 1246 to 1255 (PNTSSQTMEK) and 1266 to 1276 (QKLPTTTSATS).

The protein belongs to the cation transport ATPase (P-type) (TC 3.A.3) family. Type IV subfamily. Mg(2+) is required as a cofactor. As to expression, expressed in testis, specifically in spermatids within seminiferous tubules (at protein level).

Its subcellular location is the cytoplasmic vesicle. It localises to the secretory vesicle. The protein localises to the acrosome membrane. The protein resides in the endoplasmic reticulum membrane. It carries out the reaction ATP + H2O + phospholipidSide 1 = ADP + phosphate + phospholipidSide 2.. It catalyses the reaction a 1,2-diacyl-sn-glycero-3-phospho-L-serine(out) + ATP + H2O = a 1,2-diacyl-sn-glycero-3-phospho-L-serine(in) + ADP + phosphate + H(+). Its function is as follows. P4-ATPase flippase which catalyzes the hydrolysis of ATP coupled to the transport of aminophospholipids from the outer to the inner leaflet of various membranes and ensures the maintenance of asymmetric distribution of phospholipids. Phospholipid translocation also seems to be implicated in vesicle formation and in uptake of lipid signaling molecules. May be responsible for the maintenance of asymmetric distribution of phosphatidylserine (PS) in spermatozoa membranes. Involved in acrosome reactions and binding of spermatozoa to zona pellucida. The sequence is that of Phospholipid-transporting ATPase IK from Mus musculus (Mouse).